The sequence spans 251 residues: Adenosylcobinamide-GDP ribazoletransferase (251 aa).

Transmembrane regions (helical) follow at residues 36–56, 60–80, 110–130, 141–161, 181–201, 202–222, and 231–251; these read LYPF…FVLS, VPIM…TGFL, VGAF…AGMF, ILIF…VSQE, EIIL…TLGI, NYLI…LKVK, and DVAG…LGII.

The protein belongs to the CobS family. Mg(2+) serves as cofactor.

The protein resides in the cell membrane. The enzyme catalyses alpha-ribazole + adenosylcob(III)inamide-GDP = adenosylcob(III)alamin + GMP + H(+). It catalyses the reaction alpha-ribazole 5'-phosphate + adenosylcob(III)inamide-GDP = adenosylcob(III)alamin 5'-phosphate + GMP + H(+). It functions in the pathway cofactor biosynthesis; adenosylcobalamin biosynthesis; adenosylcobalamin from cob(II)yrinate a,c-diamide: step 7/7. Functionally, joins adenosylcobinamide-GDP and alpha-ribazole to generate adenosylcobalamin (Ado-cobalamin). Also synthesizes adenosylcobalamin 5'-phosphate from adenosylcobinamide-GDP and alpha-ribazole 5'-phosphate. The sequence is that of Adenosylcobinamide-GDP ribazoletransferase from Clostridium perfringens (strain ATCC 13124 / DSM 756 / JCM 1290 / NCIMB 6125 / NCTC 8237 / Type A).